Here is a 124-residue protein sequence, read N- to C-terminus: Ribonuclease pancreatic A (124 aa).

The interval 1 to 24 (AESSAMKFERQHVDSGGSSSSNAN) is disordered. K7 and R10 together coordinate substrate. H12 acts as the Proton acceptor in catalysis. Disulfide bonds link C26–C84, C40–C95, C58–C110, and C65–C72. Substrate-binding positions include 41–45 (KPVNT), K66, and R85. Catalysis depends on H119, which acts as the Proton donor.

Belongs to the pancreatic ribonuclease family. As to expression, pancreas.

It localises to the secreted. The enzyme catalyses an [RNA] containing cytidine + H2O = an [RNA]-3'-cytidine-3'-phosphate + a 5'-hydroxy-ribonucleotide-3'-[RNA].. It carries out the reaction an [RNA] containing uridine + H2O = an [RNA]-3'-uridine-3'-phosphate + a 5'-hydroxy-ribonucleotide-3'-[RNA].. The sequence is that of Ribonuclease pancreatic A from Cavia porcellus (Guinea pig).